Here is a 165-residue protein sequence, read N- to C-terminus: uncharacterized protein (165 aa).

An N-terminal signal peptide occupies residues 1–25 (MKRVLFSVIVFTAVGFTFCQSKAHA).

This is an uncharacterized protein from Bacillus subtilis (strain 168).